The primary structure comprises 143 residues: Transcription antitermination protein NusB (143 aa).

It belongs to the NusB family.

In terms of biological role, involved in transcription antitermination. Required for transcription of ribosomal RNA (rRNA) genes. Binds specifically to the boxA antiterminator sequence of the ribosomal RNA (rrn) operons. The chain is Transcription antitermination protein NusB from Desulforamulus reducens (strain ATCC BAA-1160 / DSM 100696 / MI-1) (Desulfotomaculum reducens).